Consider the following 449-residue polypeptide: MNHNSNLVLPSHQTETQTQDETDISVWRFRGSDNAAKASSVTMRVIVYKLFDECSLDVKKPLLPLAHGDPSVYPCYRTSILVENAVVDVLRSGKGNSYGPAAGILPARQAVADYVNRDLTNKVKPNDVFITVGCNQGIEVVLQSLARPNANILLPRPSYPHYEARAVYSGLEVRKFDLLPEKEWEIDLPGIEAMADENTVAMVIINPNNPCGNVYSYDHLKKVAETAKKLGIMVITDEVYCQTIFGDKPFVPMGEFSSITPVITLGGISKGWIVPGWRIGWIALNDPRGILKSTGMVQSIQQNLDITPDATTIVQAALPEILGKANKELFAKKNSMLKQNVELVCDRLKEIPCLVCNKKPESCTYLLTKLKLPLLEDIEDDMDFCMKLAKEENLVLLPGVALGLKNWIRITIGVEAQMLEDALERLNGFCKRHLKKTESSFQALSNGKI.

Polar residues predominate over residues 1 to 12 (MNHNSNLVLPSH). The disordered stretch occupies residues 1-20 (MNHNSNLVLPSHQTETQTQD).

Belongs to the class-I pyridoxal-phosphate-dependent aminotransferase family. It depends on pyridoxal 5'-phosphate as a cofactor.

The polypeptide is Probable aminotransferase TAT1 (Arabidopsis thaliana (Mouse-ear cress)).